Here is a 137-residue protein sequence, read N- to C-terminus: uncharacterized protein (137 aa).

Residues 58–135 (VHVVAKTVRP…EVNLQMFLMN (78 aa)) form the Ubiquitin-like domain.

The protein resides in the cytoplasm. It localises to the nucleus. This is an uncharacterized protein from Schizosaccharomyces pombe (strain 972 / ATCC 24843) (Fission yeast).